Reading from the N-terminus, the 250-residue chain is MTDILIDNTATETVRTLIRAFPLVPVSQPPEQGSYLLAEHDTVSLRLVGEKSSVIVDFASGAAQYRRTKGGGELIAKAVNHTAHPTVWDATAGLGRDSFVLASLGLAVTAFEQHPAVACLLSDGIRRALLNPETQNTAAHINLHFGNAAEQMPALVQTQGKPDIVYLDPMYPERRKSAAVKKEMTYFHRLVGEAQDEAALLHTARQTAKKRVVVKRPRLGEHLAGQDPAYQYTGKSTRFDVYLPYGTDKG.

S-adenosyl-L-methionine is bound by residues R96–D97 and D168.

This sequence belongs to the methyltransferase superfamily. RsmJ family.

It localises to the cytoplasm. The enzyme catalyses guanosine(1516) in 16S rRNA + S-adenosyl-L-methionine = N(2)-methylguanosine(1516) in 16S rRNA + S-adenosyl-L-homocysteine + H(+). Functionally, specifically methylates the guanosine in position 1516 of 16S rRNA. In Neisseria meningitidis serogroup B (strain ATCC BAA-335 / MC58), this protein is Ribosomal RNA small subunit methyltransferase J.